A 380-amino-acid polypeptide reads, in one-letter code: Lipid-A-disaccharide synthase (380 aa).

It belongs to the LpxB family.

It carries out the reaction a lipid X + a UDP-2-N,3-O-bis[(3R)-3-hydroxyacyl]-alpha-D-glucosamine = a lipid A disaccharide + UDP + H(+). Its pathway is bacterial outer membrane biogenesis; LPS lipid A biosynthesis. Functionally, condensation of UDP-2,3-diacylglucosamine and 2,3-diacylglucosamine-1-phosphate to form lipid A disaccharide, a precursor of lipid A, a phosphorylated glycolipid that anchors the lipopolysaccharide to the outer membrane of the cell. The protein is Lipid-A-disaccharide synthase of Pseudomonas syringae pv. tomato (strain ATCC BAA-871 / DC3000).